The primary structure comprises 185 residues: Ribosome-recycling factor (185 aa).

Belongs to the RRF family.

Its subcellular location is the cytoplasm. In terms of biological role, responsible for the release of ribosomes from messenger RNA at the termination of protein biosynthesis. May increase the efficiency of translation by recycling ribosomes from one round of translation to another. The protein is Ribosome-recycling factor of Desulfosudis oleivorans (strain DSM 6200 / JCM 39069 / Hxd3) (Desulfococcus oleovorans).